Reading from the N-terminus, the 3550-residue chain is Zinc finger homeobox protein 4 (3550 aa).

M1 is subject to N-acetylmethionine. Disordered stretches follow at residues 1–54 (METC…LKTD), 426–479 (HLSS…AYSN), and 521–614 (TSSS…IECP). A compositionally biased stretch (polar residues) spans 9-20 (ISRQENGQSTSK). 2 stretches are compositionally biased toward basic and acidic residues: residues 39–54 (EPDR…LKTD) and 433–451 (KMSE…KEST). A compositionally biased stretch (acidic residues) spans 467-479 (EPGDEDEEDAYSN). Polar residues-rich tracts occupy residues 542 to 553 (GRSNGNVTNSYS) and 566 to 576 (RDGTTAAPSET). 3 consecutive C2H2-type zinc fingers follow at residues 611–634 (IECP…TMMH), 642–665 (LKCP…KEKH), and 697–721 (FRCE…SDKH). Residues 739–763 (HSAPTPNTSLSGCGTPSPSKPKQKP) form a disordered region. Polar residues predominate over residues 742-752 (PTPNTSLSGCG). 4 C2H2-type zinc fingers span residues 765 to 787 (RRCE…MTSE), 915 to 939 (YQCK…TDKH), 971 to 993 (LKCN…TTNH), and 1019 to 1043 (YYCA…SVKH). The disordered stretch occupies residues 1100–1142 (KAASEEPSEDAGDPLKPPTVAEDDEKEAHKRDNSEGKISTKDP). Over residues 1125-1142 (KEAHKRDNSEGKISTKDP) the composition is skewed to basic and acidic residues. A Glycyl lysine isopeptide (Lys-Gly) (interchain with G-Cter in SUMO2) cross-link involves residue K1165. C2H2-type zinc fingers lie at residues 1188 to 1211 (YQYP…LSQH) and 1217 to 1240 (ICCP…THLH). Positions 1271 to 1339 (APEKSEQDPP…EWNKTSSKDV (69 aa)) are disordered. Basic and acidic residues predominate over residues 1297–1326 (VDDKSMSGLEDSKVGVEIKNEEQKPAKEPV). A Glycyl lysine isopeptide (Lys-Gly) (interchain with G-Cter in SUMO2) cross-link involves residue K1315. 2 C2H2-type zinc fingers span residues 1368-1390 (YRCN…SQYH) and 1396-1419 (TMCT…EAGH). The tract at residues 1467–1492 (EGKASPVESDGSSIPDDLGLEPKRTL) is disordered. A C2H2-type 12 zinc finger spans residues 1512–1538 (YKCTVCKESFTQKNILLVHYNSVSHLH). K1562 is covalently cross-linked (Glycyl lysine isopeptide (Lys-Gly) (interchain with G-Cter in SUMO2)). Residues 1564–1588 (YKCSTCSVAYSQSSTLEIHMRSVLH) form a C2H2-type 13 zinc finger. The disordered stretch occupies residues 1779-1873 (PQLQPQNQQP…CIPPPRIASG (95 aa)). Residues 1792 to 1808 (QQQQPQQQPSKLLKQEQ) show a composition bias toward low complexity. K1805 is covalently cross-linked (Glycyl lysine isopeptide (Lys-Gly) (interchain with G-Cter in SUMO2)). Residues 1823 to 1860 (PSYKEAEEVTEKQEKPKQEFINDTEGLKDSKDIKKQKS) show a composition bias toward basic and acidic residues. Residues 1916 to 1939 (LECGICGKLFSNVLILKSHQEHVH) form a C2H2-type 14 zinc finger. The segment at 1984–2006 (KIPNTVSAPLQAPPPTPPSAPQQ) is disordered. The segment covering 1994-2003 (QAPPPTPPSA) has biased composition (pro residues). 2 DNA-binding regions (homeobox) span residues 2069 to 2128 (FKRP…RQRN) and 2166 to 2225 (KRSS…RKSY). The C2H2-type 15; degenerate zinc finger occupies 2252 to 2276 (YQCKKCNVVFPRIFDLITHQKKQCY). Over residues 2318 to 2331 (TLVASSGSGTSTPL) the composition is skewed to polar residues. The segment at 2318–2412 (TLVASSGSGT…SQTPIPSSPL (95 aa)) is disordered. The span at 2337–2355 (PEPEKNSPKTEYPGEKTKQ) shows a compositional bias: basic and acidic residues. The segment covering 2356–2376 (SDPSLPQGTKSAPSSVLTSSE) has biased composition (polar residues). The segment covering 2383-2392 (PQPPTQPPKQ) has biased composition (pro residues). Polar residues predominate over residues 2401–2412 (SASQTPIPSSPL). The C2H2-type 16 zinc finger occupies 2430–2452 (YPCDQCTLAFPTLELWKEHQHMH). Residues 2490 to 2508 (GSSLTQMPPQTSTAHTTAP) show a composition bias toward polar residues. The segment at 2490 to 2545 (GSSLTQMPPQTSTAHTTAPASVAASLKRKLEDKEDNNCSEKEGGNSGEDQHRDKRL) is disordered. Positions 2517–2541 (RKLEDKEDNNCSEKEGGNSGEDQHR) are enriched in basic and acidic residues. Positions 2542 to 2601 (DKRLRTTITPEQLEILYEKYLLDSNPTRKMLDHIAREVGLKKRVVQVWFQNTRARERKGQ) form a DNA-binding region, homeobox 3. The C2H2-type 17 zinc-finger motif lies at 2612–2635 (KRCPFCRALFKAKSALESHIRSRH). S2645 is subject to Phosphoserine. Disordered stretches follow at residues 2746–2791 (AISD…ATTP) and 2810–2866 (HFND…PGHK). The segment covering 2781–2791 (LDSLQKPATTP) has biased composition (polar residues). Over residues 2811–2820 (FNDKDGDHDQ) the composition is skewed to basic and acidic residues. The span at 2843–2855 (PSSPNPFGSSNPF) shows a compositional bias: low complexity. Positions 2865–2924 (HKRFRTQMSNLQLKVLKACFSDYRTPTMQECEMLGNEIGLPKRVVQVWFQNARAKERKFK) form a DNA-binding region, homeobox 4. Residues 2943–2967 (PECTLCGVKYSARLSIRDHIFSKQH) form a C2H2-type 18 zinc finger. 2 disordered regions span residues 3051 to 3156 (PSSL…EEKI) and 3261 to 3318 (QDSL…VQLD). Residues 3058-3068 (PQNSNTLTSPG) show a composition bias toward polar residues. Low complexity predominate over residues 3075–3088 (PSSATSSPALSLSS). The segment covering 3097-3109 (TPPPPPPPPPPPS) has biased composition (pro residues). Residues 3136-3156 (IKEEESEAIKPEKHPKKEEKI) show a composition bias toward basic and acidic residues. Residue K3137 forms a Glycyl lysine isopeptide (Lys-Gly) (interchain with G-Cter in SUMO2) linkage. Positions 3248–3277 (ALLQQYQQYQQSLQDSLQKQQKQQQEQQQK) form a coiled coil. A compositionally biased stretch (low complexity) spans 3261–3276 (QDSLQKQQKQQQEQQQ). A compositionally biased stretch (basic and acidic residues) spans 3298–3318 (SETKEEKSTAPESTKEEVQLD). The segment at 3337-3361 (FVCRKCQMMFTDEDATVNHQKSFCY) adopts a C2H2-type 19; degenerate zinc-finger fold. The segment at 3381-3405 (YQCLACDLALSGNEALSQHLQSSLH) adopts a C2H2-type 20 zinc-finger fold. The tract at residues 3424–3445 (LPHSVCSPPPNTSSTSPSAASS) is disordered. Positions 3435–3445 (TSSTSPSAASS) are enriched in low complexity.

Belongs to the krueppel C2H2-type zinc-finger protein family. As to expression, expressed in brain, heart, lung, muscle and small intestine. No expression detected in undifferentiated P19 cells, however, expression was seen following retinoic acid treatment to induce neuronal differentiation. Expressed in undifferentiated C2C12 cells, following induction of muscle differentiation in a low-serum medium, expression levels were decreased.

It localises to the nucleus. May play a role in neural and muscle differentiation. May be involved in transcriptional regulation. The protein is Zinc finger homeobox protein 4 (Zfhx4) of Mus musculus (Mouse).